A 626-amino-acid polypeptide reads, in one-letter code: MVATVSSTSLLEQPELLERRLQEIPQEPGVYFMGDRQGEILYIGKAKKLRTRVRSYFRDSQPHTARIALMVQQVAEIEFIVTDTEAEALALEANLIKQHQPHFNVLLKDDKKYPYVCITWSETYPRIFITRKRRLNQAKDRYYGPYVDSFSLRQTLRLIQRIFPLRQRRQPLFKHRPCLNYDIGRCPGVCQELITPEDYRQTLQKVAMVFQGRTQELHQLLTQQMEKAAADLKFEQAALIRDQINSLGKLNADQKVSLPQDTISRDAIAVASDGQISAIQLFQIRAGRLVGRLGFFADGVESELEKGEVLQRVLEQHYQQVEAVEIPSEVILPCALPDGELLNDWLTSQRGRKVTFNLPQRQTKAELLEMVERNAQYELERLQKQTAKNVTALEDLAEILNLETLPKRIEGYDISHIQGSNAVASQVVFIDGVPAQQYYRHYKIKNPSIKVGHSDDFASLAEVIIRRFQSSVKGKKNQQDWPDLIMIDGGKGQLSAVVKVLKKMDLLDKFTVVSLAKQREEIFLPGESQPLPTHAEQPGVQLLRRLRDEAHRFAVSFHRQQRLSKSRRSRLDEIPGLGFSRQKQLLAHFRSLDYIREASVKQLQEVPGIGPQLAQTIYDYFHPVNS.

The 80-residue stretch at 26–105 folds into the GIY-YIG domain; the sequence is QEPGVYFMGD…IKQHQPHFNV (80 aa). The 36-residue stretch at 215–250 folds into the UVR domain; it reads QELHQLLTQQMEKAAADLKFEQAALIRDQINSLGKL.

It belongs to the UvrC family. As to quaternary structure, interacts with UvrB in an incision complex.

The protein resides in the cytoplasm. Functionally, the UvrABC repair system catalyzes the recognition and processing of DNA lesions. UvrC both incises the 5' and 3' sides of the lesion. The N-terminal half is responsible for the 3' incision and the C-terminal half is responsible for the 5' incision. This is UvrABC system protein C from Synechocystis sp. (strain ATCC 27184 / PCC 6803 / Kazusa).